Consider the following 776-residue polypeptide: Ent-8-alpha-hydroxylabd-13-en-15-yl diphosphate synthase CPS4, chloroplastic (776 aa).

The N-terminal 60 residues, 1–60 (MSFASNATGFRIPLTTCVYPSPILRFNAKVGSGSSYGTTEAQRNMKCVDGIGRSRVVAVA), are a transit peptide targeting the chloroplast. Lys-226 lines the substrate pocket. Positions 357 and 359 each coordinate Mg(2+). The DXDD motif signature appears at 357–360 (DSDD). Lys-443 is a substrate binding site.

The protein belongs to the terpene synthase family. The cofactor is Mg(2+).

The protein resides in the plastid. It localises to the chloroplast. It carries out the reaction ent-8alpha-hydroxylabd-13-en-15-yl diphosphate = (2E,6E,10E)-geranylgeranyl diphosphate + H2O. The protein operates within secondary metabolite biosynthesis; terpenoid biosynthesis. Functionally, involved in diterpenoid biosynthesis. Catalyzes the conversion of all-trans-geranylgeranyl diphosphate to ent-8alpha-hydroxylabd-13-en-15-yl diphosphate. This is Ent-8-alpha-hydroxylabd-13-en-15-yl diphosphate synthase CPS4, chloroplastic from Salvia miltiorrhiza (Chinese sage).